Here is a 227-residue protein sequence, read N- to C-terminus: Phosphoribosylformylglycinamidine synthase subunit PurQ (227 aa).

The Glutamine amidotransferase type-1 domain maps to 3 to 225 (FAVIVFPGSN…LKQWRETYVV (223 aa)). The active-site Nucleophile is the Cys86. Residues His194 and Glu196 contribute to the active site.

Part of the FGAM synthase complex composed of 1 PurL, 1 PurQ and 2 PurS subunits.

The protein localises to the cytoplasm. The enzyme catalyses N(2)-formyl-N(1)-(5-phospho-beta-D-ribosyl)glycinamide + L-glutamine + ATP + H2O = 2-formamido-N(1)-(5-O-phospho-beta-D-ribosyl)acetamidine + L-glutamate + ADP + phosphate + H(+). It carries out the reaction L-glutamine + H2O = L-glutamate + NH4(+). The protein operates within purine metabolism; IMP biosynthesis via de novo pathway; 5-amino-1-(5-phospho-D-ribosyl)imidazole from N(2)-formyl-N(1)-(5-phospho-D-ribosyl)glycinamide: step 1/2. In terms of biological role, part of the phosphoribosylformylglycinamidine synthase complex involved in the purines biosynthetic pathway. Catalyzes the ATP-dependent conversion of formylglycinamide ribonucleotide (FGAR) and glutamine to yield formylglycinamidine ribonucleotide (FGAM) and glutamate. The FGAM synthase complex is composed of three subunits. PurQ produces an ammonia molecule by converting glutamine to glutamate. PurL transfers the ammonia molecule to FGAR to form FGAM in an ATP-dependent manner. PurS interacts with PurQ and PurL and is thought to assist in the transfer of the ammonia molecule from PurQ to PurL. The polypeptide is Phosphoribosylformylglycinamidine synthase subunit PurQ (Bacillus anthracis (strain A0248)).